Here is a 496-residue protein sequence, read N- to C-terminus: 4-O-methyl-glucuronoyl methylesterase 1 (496 aa).

The N-terminal stretch at 1–19 (MKSTVASALLVLAGTAVQA) is a signal peptide. One can recognise a CBM1 domain in the interval 20-55 (QSGPWQQCGGIGWQGPFTCVSGHTCQVLNDWYHQCV). A disordered region spans residues 57–151 (GGGPSPPPTS…RLPDPFTFHN (95 aa)). A compositionally biased stretch (pro residues) spans 59–125 (GPSPPPTSPP…SPPPTSPPPS (67 aa)). Disulfide bonds link C129–C163, C307–C443, and C339–C415. Residues 306 to 311 (GCSRNG) carry the GXSYXG catalytic site motif motif. The Nucleophile role is filled by S308. Positions 312, 354, 362, and 406 each coordinate substrate. The active-site Proton donor/acceptor is the H442.

The protein belongs to the carbohydrate esterase 15 (CE15) family.

The protein resides in the secreted. It carries out the reaction a 4-O-methyl-alpha-D-glucuronosyl ester derivative + H2O = 4-O-methyl-alpha-D-glucuronate derivative + an alcohol + H(+). Glucuronoyl esterase which may play a significant role in biomass degradation, as it is considered to disconnect hemicellulose from lignin through the hydrolysis of the ester bond between 4-O-methyl-D-glucuronic acid residues of glucuronoxylans and aromatic alcohols of lignin. Cleaves native lignin-carbohydrate (LC) ester bonds from LC complex preparations of spruce (softwood) and birch (hardwood), containing mainly hemicelluloses with partially acetylated glucomannans in spruce and partially acetylated xylan in birch. Can hydrolyze benzyl glucuronic acid (BnGlcA), allyl glucuronic acid (allylGlcA) and to a lower degree methyl glucuronic acid (MeGlcA) in vitro. The polypeptide is 4-O-methyl-glucuronoyl methylesterase 1 (Sodiomyces alcalophilus (Acremonium alcalophilum)).